The chain runs to 362 residues: Peptide chain release factor 1 (362 aa).

At Gln-237 the chain carries N5-methylglutamine. A compositionally biased stretch (basic and acidic residues) spans 282-296 (QQEEDKRRAEADSTR). The interval 282–304 (QQEEDKRRAEADSTRRSILSTGD) is disordered.

Belongs to the prokaryotic/mitochondrial release factor family. Methylated by PrmC. Methylation increases the termination efficiency of RF1.

It localises to the cytoplasm. Functionally, peptide chain release factor 1 directs the termination of translation in response to the peptide chain termination codons UAG and UAA. In Tolumonas auensis (strain DSM 9187 / NBRC 110442 / TA 4), this protein is Peptide chain release factor 1.